A 320-amino-acid chain; its full sequence is Apolipoprotein E (320 aa).

A signal peptide spans 1–18 (MKVLWAALLVAFLAGCQG). Repeat copies occupy residues 82–103 (ALMD…EQLS), 104–125 (PVAE…ARLG), 126–147 (ADME…AMLG), 148–169 (QSTE…KRLL), 170–191 (RDVD…EGAE), 192–213 (RGVS…ARAA), 214–236 (TVGS…ERLR), and 237–258 (ARME…EQVE). An 8 X 22 AA approximate tandem repeats region spans residues 82 to 258 (ALMDETMKEL…RLDEVKEQVE (177 aa)). The residue at position 145 (Met-145) is a Methionine sulfoxide. The residue at position 149 (Ser-149) is a Phosphoserine. The tract at residues 160–170 (HLRKLRKRLLR) is LDL and other lipoprotein receptors binding. Residue 164-167 (LRKR) coordinates heparin. Residues 212–293 (AATVGSSLAG…SWFEPLVEDM (82 aa)) are lipid-binding and lipoprotein association. 232-239 (GERLRARM) serves as a coordination point for heparin. Positions 269-320 (QQMRLQAEAFQARLKSWFEPLVEDMQRQWAGLVEKVQAAVGASAAPVPSDNH) are homooligomerization. Positions 281–293 (RLKSWFEPLVEDM) are specificity for association with VLDL.

It belongs to the apolipoprotein A1/A4/E family. In terms of assembly, homotetramer. May interact with ABCA1; functionally associated with ABCA1 in the biogenesis of HDLs. May interact with APP/A4 amyloid-beta peptide; the interaction is extremely stable in vitro but its physiological significance is unclear. May interact with MAPT. May interact with MAP2. In the cerebrospinal fluid, interacts with secreted SORL1. Interacts with PMEL; this allows the loading of PMEL luminal fragment on ILVs to induce fibril nucleation. APOE exists as multiple glycosylated and sialylated glycoforms within cells and in plasma. The extent of glycosylation and sialylation are tissue and context specific. In terms of processing, glycated in plasma VLDL. Post-translationally, phosphorylated by FAM20C in the extracellular medium.

It localises to the secreted. It is found in the extracellular space. Its subcellular location is the extracellular matrix. The protein resides in the extracellular vesicle. The protein localises to the endosome. It localises to the multivesicular body. Its function is as follows. APOE is an apolipoprotein, a protein associating with lipid particles, that mainly functions in lipoprotein-mediated lipid transport between organs via the plasma and interstitial fluids. APOE is a core component of plasma lipoproteins and is involved in their production, conversion and clearance. Apolipoproteins are amphipathic molecules that interact both with lipids of the lipoprotein particle core and the aqueous environment of the plasma. As such, APOE associates with chylomicrons, chylomicron remnants, very low density lipoproteins (VLDL) and intermediate density lipoproteins (IDL) but shows a preferential binding to high-density lipoproteins (HDL). It also binds a wide range of cellular receptors including the LDL receptor/LDLR, the LDL receptor-related proteins LRP1, LRP2 and LRP8 and the very low-density lipoprotein receptor/VLDLR that mediate the cellular uptake of the APOE-containing lipoprotein particles. Finally, APOE also has a heparin-binding activity and binds heparan-sulfate proteoglycans on the surface of cells, a property that supports the capture and the receptor-mediated uptake of APOE-containing lipoproteins by cells. A main function of APOE is to mediate lipoprotein clearance through the uptake of chylomicrons, VLDLs, and HDLs by hepatocytes. APOE is also involved in the biosynthesis by the liver of VLDLs as well as their uptake by peripheral tissues ensuring the delivery of triglycerides and energy storage in muscle, heart and adipose tissues. By participating in the lipoprotein-mediated distribution of lipids among tissues, APOE plays a critical role in plasma and tissues lipid homeostasis. APOE is also involved in two steps of reverse cholesterol transport, the HDLs-mediated transport of cholesterol from peripheral tissues to the liver, and thereby plays an important role in cholesterol homeostasis. First, it is functionally associated with ABCA1 in the biogenesis of HDLs in tissues. Second, it is enriched in circulating HDLs and mediates their uptake by hepatocytes. APOE also plays an important role in lipid transport in the central nervous system, regulating neuron survival and sprouting. The protein is Apolipoprotein E (APOE) of Plecturocebus moloch (Dusky titi monkey).